A 419-amino-acid chain; its full sequence is Putative BTB/POZ domain-containing protein L85 (419 aa).

Residues Thr-16 to Glu-89 enclose the BTB domain. Residues Ser-250–His-290 are disordered. Residues Glu-263 to His-290 show a composition bias toward basic and acidic residues.

It belongs to the mimivirus BTB/WD family.

The chain is Putative BTB/POZ domain-containing protein L85 from Acanthamoeba polyphaga (Amoeba).